The following is a 366-amino-acid chain: uncharacterized protein (366 aa).

This is an uncharacterized protein from Caenorhabditis elegans.